The primary structure comprises 554 residues: MLO-like protein 14 (554 aa).

Residues Met1–Gly13 are Extracellular-facing. A helical transmembrane segment spans residues Leu14 to Val34. Topologically, residues Glu35–Glu63 are cytoplasmic. The chain crosses the membrane as a helical span at residues Leu64–Ile84. The Extracellular portion of the chain corresponds to Cys85 to Arg158. A helical transmembrane segment spans residues Phe159 to Ile179. Residues Val180–Gln281 are Cytoplasmic-facing. A helical membrane pass occupies residues Lys282 to Ile302. A topological domain (extracellular) is located at residue Lys303. A helical transmembrane segment spans residues Gly304–Ala324. At Lys325–Ser366 the chain is on the cytoplasmic side. A helical membrane pass occupies residues Leu367–Trp387. Over Gln388–Leu406 the chain is Extracellular. Residues Ile407 to Val427 form a helical membrane-spanning segment. The Cytoplasmic portion of the chain corresponds to Thr428–Cys554. Positions Gln441–Leu462 are calmodulin-binding.

It belongs to the MLO family.

The protein resides in the membrane. In terms of biological role, may be involved in modulation of pathogen defense and leaf cell death. Activity seems to be regulated by Ca(2+)-dependent calmodulin binding and seems not to require heterotrimeric G proteins. The polypeptide is MLO-like protein 14 (MLO14) (Arabidopsis thaliana (Mouse-ear cress)).